A 410-amino-acid chain; its full sequence is Elongation factor Tu, chloroplastic (410 aa).

Positions 10–215 (KPHVNIGTIG…IVDEYIPTPQ (206 aa)) constitute a tr-type G domain. Positions 19–26 (GHVDHGKT) are G1. 19–26 (GHVDHGKT) provides a ligand contact to GTP. A Mg(2+)-binding site is contributed by T26. The tract at residues 61–65 (GITIN) is G2. The segment at 82-85 (DCPG) is G3. Residues 82–86 (DCPGH) and 137–140 (NKAD) contribute to the GTP site. A G4 region spans residues 137-140 (NKAD). The segment at 175-177 (SAL) is G5.

Belongs to the TRAFAC class translation factor GTPase superfamily. Classic translation factor GTPase family. EF-Tu/EF-1A subfamily.

It localises to the plastid. The protein localises to the chloroplast. The enzyme catalyses GTP + H2O = GDP + phosphate + H(+). Its function is as follows. GTP hydrolase that promotes the GTP-dependent binding of aminoacyl-tRNA to the A-site of ribosomes during protein biosynthesis. The polypeptide is Elongation factor Tu, chloroplastic (tufA) (Cyanidioschyzon merolae (strain NIES-3377 / 10D) (Unicellular red alga)).